The following is a 122-amino-acid chain: Large ribosomal subunit protein uL14 (122 aa).

It belongs to the universal ribosomal protein uL14 family. Part of the 50S ribosomal subunit. Forms a cluster with proteins L3 and L19. In the 70S ribosome, L14 and L19 interact and together make contacts with the 16S rRNA in bridges B5 and B8.

Functionally, binds to 23S rRNA. Forms part of two intersubunit bridges in the 70S ribosome. The polypeptide is Large ribosomal subunit protein uL14 (Ruthia magnifica subsp. Calyptogena magnifica).